The following is a 257-amino-acid chain: Putative hydro-lyase Bcen2424_3550 (257 aa).

This sequence belongs to the D-glutamate cyclase family.

This chain is Putative hydro-lyase Bcen2424_3550, found in Burkholderia cenocepacia (strain HI2424).